The following is a 462-amino-acid chain: Cysteine--tRNA ligase (462 aa).

Cys30 is a Zn(2+) binding site. The 'HIGH' region signature appears at 32 to 42; the sequence is MTVYDYCHVGH. Zn(2+)-binding residues include Cys214, His239, and Glu243. The short motif at 271-275 is the 'KMSKS' region element; that stretch reads KMSKS. ATP is bound at residue Lys274.

It belongs to the class-I aminoacyl-tRNA synthetase family. In terms of assembly, monomer. Zn(2+) serves as cofactor.

It localises to the cytoplasm. The enzyme catalyses tRNA(Cys) + L-cysteine + ATP = L-cysteinyl-tRNA(Cys) + AMP + diphosphate. This is Cysteine--tRNA ligase from Cupriavidus pinatubonensis (strain JMP 134 / LMG 1197) (Cupriavidus necator (strain JMP 134)).